The sequence spans 983 residues: Bifunctional glutamine synthetase adenylyltransferase/adenylyl-removing enzyme (983 aa).

The adenylyl removase stretch occupies residues 1 to 490; it reads MDRKSSVTID…AHGQVFYSPV (490 aa). The segment at 496–983 is adenylyl transferase; that stretch reads RIPTQDLRMS…RVVDAVFWNQ (488 aa).

It belongs to the GlnE family. The cofactor is Mg(2+).

It carries out the reaction [glutamine synthetase]-O(4)-(5'-adenylyl)-L-tyrosine + phosphate = [glutamine synthetase]-L-tyrosine + ADP. The catalysed reaction is [glutamine synthetase]-L-tyrosine + ATP = [glutamine synthetase]-O(4)-(5'-adenylyl)-L-tyrosine + diphosphate. Involved in the regulation of glutamine synthetase GlnA, a key enzyme in the process to assimilate ammonia. When cellular nitrogen levels are high, the C-terminal adenylyl transferase (AT) inactivates GlnA by covalent transfer of an adenylyl group from ATP to specific tyrosine residue of GlnA, thus reducing its activity. Conversely, when nitrogen levels are low, the N-terminal adenylyl removase (AR) activates GlnA by removing the adenylyl group by phosphorolysis, increasing its activity. The regulatory region of GlnE binds the signal transduction protein PII (GlnB) which indicates the nitrogen status of the cell. The polypeptide is Bifunctional glutamine synthetase adenylyltransferase/adenylyl-removing enzyme (Cutibacterium acnes (strain DSM 16379 / KPA171202) (Propionibacterium acnes)).